A 209-amino-acid chain; its full sequence is Auxin-binding protein ABP19a (209 aa).

The N-terminal stretch at 1–18 is a signal peptide; that stretch reads MIFPIFFTFFLLLSSSHA. Cys-24 and Cys-39 form a disulfide bridge. A Cupin type-1 domain is found at 53–199; the sequence is SGLGIAGNTT…TTFLDAAQIK (147 aa). Asn-60 carries N-linked (GlcNAc...) asparagine glycosylation. Mn(2+)-binding residues include His-101, His-103, Glu-108, and His-147.

It belongs to the germin family. In terms of assembly, interacts with ABP20.

The protein localises to the secreted. It localises to the extracellular space. It is found in the apoplast. Its subcellular location is the cell wall. Its function is as follows. Probable receptor for the plant growth-promoting hormone auxin. The sequence is that of Auxin-binding protein ABP19a (ABP19A) from Prunus persica (Peach).